The following is a 682-amino-acid chain: DNA ligase (682 aa).

Residues 43-47 (DSEYD), 92-93 (SL), and Asp-123 contribute to the NAD(+) site. The active-site N6-AMP-lysine intermediate is Lys-125. Positions 146, 184, 302, and 326 each coordinate NAD(+). 4 residues coordinate Zn(2+): Cys-420, Cys-423, Cys-438, and Cys-443. Residues 603-682 (TTKGFFTGKK…TFLQKLLIVL (80 aa)) form the BRCT domain.

It belongs to the NAD-dependent DNA ligase family. LigA subfamily. Mg(2+) serves as cofactor. The cofactor is Mn(2+).

The catalysed reaction is NAD(+) + (deoxyribonucleotide)n-3'-hydroxyl + 5'-phospho-(deoxyribonucleotide)m = (deoxyribonucleotide)n+m + AMP + beta-nicotinamide D-nucleotide.. Functionally, DNA ligase that catalyzes the formation of phosphodiester linkages between 5'-phosphoryl and 3'-hydroxyl groups in double-stranded DNA using NAD as a coenzyme and as the energy source for the reaction. It is essential for DNA replication and repair of damaged DNA. The chain is DNA ligase from Lawsonia intracellularis (strain PHE/MN1-00).